Reading from the N-terminus, the 692-residue chain is Elongation factor G (692 aa).

Residues 8 to 283 (DKYRNIGIMA…AVVDYMPSPL (276 aa)) enclose the tr-type G domain. Residues 17-24 (AHIDAGKT), 81-85 (DTPGH), and 135-138 (NKMD) contribute to the GTP site.

It belongs to the TRAFAC class translation factor GTPase superfamily. Classic translation factor GTPase family. EF-G/EF-2 subfamily.

It is found in the cytoplasm. In terms of biological role, catalyzes the GTP-dependent ribosomal translocation step during translation elongation. During this step, the ribosome changes from the pre-translocational (PRE) to the post-translocational (POST) state as the newly formed A-site-bound peptidyl-tRNA and P-site-bound deacylated tRNA move to the P and E sites, respectively. Catalyzes the coordinated movement of the two tRNA molecules, the mRNA and conformational changes in the ribosome. The sequence is that of Elongation factor G from Trichlorobacter lovleyi (strain ATCC BAA-1151 / DSM 17278 / SZ) (Geobacter lovleyi).